A 327-amino-acid chain; its full sequence is Succinylglutamate desuccinylase (327 aa).

Residues H53, E56, and H146 each contribute to the Zn(2+) site. E209 is a catalytic residue.

The protein belongs to the AspA/AstE family. Succinylglutamate desuccinylase subfamily. Requires Zn(2+) as cofactor.

The enzyme catalyses N-succinyl-L-glutamate + H2O = L-glutamate + succinate. The protein operates within amino-acid degradation; L-arginine degradation via AST pathway; L-glutamate and succinate from L-arginine: step 5/5. Transforms N(2)-succinylglutamate into succinate and glutamate. This Serratia proteamaculans (strain 568) protein is Succinylglutamate desuccinylase.